A 438-amino-acid chain; its full sequence is Putative pectate lyase 14 (438 aa).

The N-terminal stretch at 1–26 is a signal peptide; sequence MVVARTLFSISATLIIFLALFLHVNA. Residues asparagine 40, asparagine 46, and asparagine 73 are each glycosylated (N-linked (GlcNAc...) asparagine). Ca(2+) is bound by residues aspartate 236, aspartate 260, and aspartate 264. The active site involves arginine 316.

This sequence belongs to the polysaccharide lyase 1 family. Ca(2+) serves as cofactor.

The catalysed reaction is Eliminative cleavage of (1-&gt;4)-alpha-D-galacturonan to give oligosaccharides with 4-deoxy-alpha-D-galact-4-enuronosyl groups at their non-reducing ends.. Its pathway is glycan metabolism; pectin degradation; 2-dehydro-3-deoxy-D-gluconate from pectin: step 2/5. The polypeptide is Putative pectate lyase 14 (Arabidopsis thaliana (Mouse-ear cress)).